Here is a 687-residue protein sequence, read N- to C-terminus: Complement C1s subcomponent (687 aa).

A signal peptide spans 1–15 (MWCIVLLSLLAWVDA). A CUB 1 domain is found at 16-130 (EPTMYGEILS…TGFAAYYVAV (115 aa)). Ca(2+) contacts are provided by Glu-60, Asp-68, Asp-113, Asp-131, Val-132, and Glu-134. Cys-65 and Cys-83 form a disulfide bridge. In terms of domain architecture, EGF-like; calcium-binding spans 131–172 (DVNECTDFADSPCSHFCNNYIGGYFCSCPPEYFLHEDKKNCG). 3 disulfides stabilise this stretch: Cys-135–Cys-147, Cys-143–Cys-156, and Cys-158–Cys-171. Ca(2+)-binding residues include Asn-149, Tyr-150, and Gly-153. (3R)-3-hydroxyasparagine is present on Asn-149. Residue Asn-174 is glycosylated (N-linked (GlcNAc...) asparagine). Cystine bridges form between Cys-175/Cys-202, Cys-234/Cys-251, Cys-294/Cys-341, Cys-321/Cys-354, Cys-359/Cys-403, Cys-386/Cys-421, Cys-425/Cys-548, Cys-594/Cys-617, and Cys-626/Cys-658. Positions 175-290 (CSGDVFTTLI…KGWKFRYHGD (116 aa)) constitute a CUB 2 domain. Sushi domains are found at residues 292–356 (IPCP…RCQP) and 357–423 (VDCG…KCVP). N-linked (GlcNAc...) asparagine glycosylation occurs at Asn-406. The Peptidase S1 domain occupies 438–679 (IFGGIITKIE…YIDWIRETMQ (242 aa)). Active-site charge relay system residues include His-475 and Asp-528. Catalysis depends on Ser-630, which acts as the Charge relay system.

Belongs to the peptidase S1 family. As to quaternary structure, C1 is a calcium-dependent trimolecular complex of C1q, C1r and C1s in the molar ration of 1:2:2. Activated C1s is an disulfide-linked heterodimer of a heavy chain and a light chain. The iron and 2-oxoglutarate dependent 3-hydroxylation of aspartate and asparagine is (R) stereospecific within EGF domains.

The catalysed reaction is Cleavage of Arg-|-Ala bond in complement component C4 to form C4a and C4b, and Lys(or Arg)-|-Lys bond in complement component C2 to form C2a and C2b: the 'classical' pathway C3 convertase.. With respect to regulation, inhibited by SERPING1. Functionally, C1s B chain is a serine protease that combines with C1q and C1r to form C1, the first component of the classical pathway of the complement system. C1r activates C1s so that it can, in turn, activate C2 and C4. Also cleaves IGFBP5 and thereby inhibits the trophic effects of IGF1. In Sus scrofa (Pig), this protein is Complement C1s subcomponent.